Reading from the N-terminus, the 348-residue chain is Protein RecA (348 aa).

67 to 74 (GPESSGKT) contributes to the ATP binding site.

The protein belongs to the RecA family.

The protein localises to the cytoplasm. Can catalyze the hydrolysis of ATP in the presence of single-stranded DNA, the ATP-dependent uptake of single-stranded DNA by duplex DNA, and the ATP-dependent hybridization of homologous single-stranded DNAs. It interacts with LexA causing its activation and leading to its autocatalytic cleavage. In Clostridioides difficile (strain 630) (Peptoclostridium difficile), this protein is Protein RecA.